The sequence spans 569 residues: Arylsulfatase I (569 aa).

The signal sequence occupies residues 1 to 23 (MHTLTGFSLVSLLSFGYLSWDWA). Ca(2+) is bound by residues aspartate 55, aspartate 56, and cysteine 93. Cysteine 93 functions as the Nucleophile in the catalytic mechanism. Cysteine 93 bears the 3-oxoalanine (Cys) mark. Lysine 147 provides a ligand contact to substrate. The active site involves histidine 149. Residue histidine 239 participates in substrate binding. 2 N-linked (GlcNAc...) asparagine glycosylation sites follow: asparagine 276 and asparagine 288. 2 residues coordinate Ca(2+): aspartate 297 and asparagine 298. Lysine 315 serves as a coordination point for substrate. Asparagine 466 and asparagine 496 each carry an N-linked (GlcNAc...) asparagine glycan. The disordered stretch occupies residues 510 to 539 (RAHPDFNGGAWGPWASDEEEEEEEGRARSF).

This sequence belongs to the sulfatase family. Requires Ca(2+) as cofactor. In terms of processing, the oxidation of Cys-93 residue to 3-oxoalanine (also known as C(alpha)-formylglycine) by SUMF1/Sulfatase-modifying factor 1, seems critical for catalytic activity. In terms of tissue distribution, expressed in placenta, in embryonic stem cells, fetal eyes and lens.

It is found in the secreted. It localises to the endoplasmic reticulum. Displays arylsulfatase activity at neutral pH, when co-expressed with SUMF1; arylsulfatase activity is measured in the secretion medium of retinal cell line, but no activity is recorded when measured in cell extracts. Lacks arylsulfatase activity. The chain is Arylsulfatase I (ARSI) from Homo sapiens (Human).